We begin with the raw amino-acid sequence, 430 residues long: Ribosomal protein uS12 methylthiotransferase RimO (430 aa).

An MTTase N-terminal domain is found at 1 to 116 (MRVGIKVLGC…IANALEKGTD (116 aa)). [4Fe-4S] cluster contacts are provided by Cys-10, Cys-46, Cys-79, Cys-148, Cys-152, and Cys-155. Positions 134 to 365 (LEERPYAYVK…LLQAEISNSR (232 aa)) constitute a Radical SAM core domain. The TRAM domain occupies 367–430 (DRFIGRKLKF…DEYDMWGSVT (64 aa)).

The protein belongs to the methylthiotransferase family. RimO subfamily. It depends on [4Fe-4S] cluster as a cofactor.

The protein resides in the cytoplasm. It carries out the reaction L-aspartate(89)-[ribosomal protein uS12]-hydrogen + (sulfur carrier)-SH + AH2 + 2 S-adenosyl-L-methionine = 3-methylsulfanyl-L-aspartate(89)-[ribosomal protein uS12]-hydrogen + (sulfur carrier)-H + 5'-deoxyadenosine + L-methionine + A + S-adenosyl-L-homocysteine + 2 H(+). Its function is as follows. Catalyzes the methylthiolation of an aspartic acid residue of ribosomal protein uS12. In Thermotoga sp. (strain RQ2), this protein is Ribosomal protein uS12 methylthiotransferase RimO.